Reading from the N-terminus, the 413-residue chain is Arginine biosynthesis bifunctional protein ArgJ 1 (413 aa).

Residues Thr-154, Lys-180, Thr-191, Glu-277, Asn-408, and Thr-413 each coordinate substrate. Catalysis depends on Thr-191, which acts as the Nucleophile.

The protein belongs to the ArgJ family. In terms of assembly, heterotetramer of two alpha and two beta chains.

The protein localises to the cytoplasm. The catalysed reaction is N(2)-acetyl-L-ornithine + L-glutamate = N-acetyl-L-glutamate + L-ornithine. It catalyses the reaction L-glutamate + acetyl-CoA = N-acetyl-L-glutamate + CoA + H(+). Its pathway is amino-acid biosynthesis; L-arginine biosynthesis; L-ornithine and N-acetyl-L-glutamate from L-glutamate and N(2)-acetyl-L-ornithine (cyclic): step 1/1. It participates in amino-acid biosynthesis; L-arginine biosynthesis; N(2)-acetyl-L-ornithine from L-glutamate: step 1/4. In terms of biological role, catalyzes two activities which are involved in the cyclic version of arginine biosynthesis: the synthesis of N-acetylglutamate from glutamate and acetyl-CoA as the acetyl donor, and of ornithine by transacetylation between N(2)-acetylornithine and glutamate. This is Arginine biosynthesis bifunctional protein ArgJ 1 from Nostoc sp. (strain PCC 7120 / SAG 25.82 / UTEX 2576).